The following is a 734-amino-acid chain: MATKFPKFSQALAQDPATRRIWYGLATAHDFESHDGMTEENLYQKIFASHFGHLAIIFLWTSGNLFHVAWQGNFEQWVLNPLKVKPIAHAIWDPHFGQPAVKAFTKGGVSYPVNIATSGVYHWWYTIGMRTNNDLYSGSIFLLILASVMLFAGWLHLQPKFRPGLAWFKNNESRLNHHLSGLFGFSSVAWSGHLIHVAIPESRGLHVGWDNFTKVYPHPEGLKAFFTGNWSNYAANPDTADHIFGTTEGSGTAILTFLGGFHPQTQSLWLTDIAHHHLAIGVIFIFAGHMYRTNWGIGHSLKEILDAHRAPSGRLGNGHKGLFETISNSLHFQLGLALASLGVITSLVAQHMYALPSYAFIAKDYVTQAALYTHHQYIAGFLMVGAFAHGAIFFVRDYDPEQNKNNVLARMLEHKEAIISHLSWVSLFLGFHTLGLYVHNDVVVAFGTPEKQILVEPVFAQWIQASSGKAMYGFDVLLSANTSIAKNASSNIWLPGWLEAINSGKNSLFLPIGPGDFLVHHAIALALHTTTLILVKGALDARGSKLMPDKKDFGYSFPCDGPGRGGTCDISAWDAFYLSMFWMLNTIGWVTFYWHWKHVTIWQGNAGQFNESSTYIMGWLRDYLWLNSSPLINGYNPFGMNSLSVWAWMFLFGHLIWATGFMFLISWRGYWQELIETLVWAHERTPLANLVRWRDKPVALSIVQARLVGLVHFTVGYIFTYAAFVIASTAGKFG.

A run of 8 helical transmembrane segments spans residues 46–69 (IFAS…FHVA), 135–158 (LYSG…LHLQ), 175–199 (LNHH…HVAI), 273–291 (IAHH…GHMY), 330–353 (LHFQ…QHMY), 369–395 (AALY…IFFV), 417–439 (AIIS…LYVH), and 517–535 (FLVH…LILV). Residues Cys-559 and Cys-568 each coordinate [4Fe-4S] cluster. A run of 2 helical transmembrane segments spans residues 575–596 (AFYL…YWHW) and 643–665 (LSVW…MFLI). Residues His-654, Met-662, and Tyr-670 each contribute to the chlorophyll a site. Trp-671 contacts phylloquinone. A helical membrane pass occupies residues 707 to 727 (LVGLVHFTVGYIFTYAAFVIA).

This sequence belongs to the PsaA/PsaB family. As to quaternary structure, the PsaA/B heterodimer binds the P700 chlorophyll special pair and subsequent electron acceptors. PSI consists of a core antenna complex that captures photons, and an electron transfer chain that converts photonic excitation into a charge separation. The eukaryotic PSI reaction center is composed of at least 11 subunits. Requires P700 is a chlorophyll a/chlorophyll a' dimer, A0 is one or more chlorophyll a, A1 is one or both phylloquinones and FX is a shared 4Fe-4S iron-sulfur center. as cofactor.

It localises to the plastid. It is found in the chloroplast thylakoid membrane. It carries out the reaction reduced [plastocyanin] + hnu + oxidized [2Fe-2S]-[ferredoxin] = oxidized [plastocyanin] + reduced [2Fe-2S]-[ferredoxin]. PsaA and PsaB bind P700, the primary electron donor of photosystem I (PSI), as well as the electron acceptors A0, A1 and FX. PSI is a plastocyanin/cytochrome c6-ferredoxin oxidoreductase, converting photonic excitation into a charge separation, which transfers an electron from the donor P700 chlorophyll pair to the spectroscopically characterized acceptors A0, A1, FX, FA and FB in turn. Oxidized P700 is reduced on the lumenal side of the thylakoid membrane by plastocyanin or cytochrome c6. The polypeptide is Photosystem I P700 chlorophyll a apoprotein A2 (Guillardia theta (Cryptophyte)).